A 351-amino-acid polypeptide reads, in one-letter code: Major capsid protein (351 aa).

This sequence belongs to the lambda phage major capsid protein family. In terms of assembly, homomultimer.

It is found in the virion. Its subcellular location is the host cytoplasm. Functionally, assembles to form an icosahedral capsid. The assembly is primed by the interaction between capsid assembly protease and portal dodecamer, and major capsid proteins assemble cooperatively to form the procapsid with the help of capsid scaffolding protein. Major capsid protein forms hexons and pentons of the icosahedron. Viral genomic DNA is packaged into the procapsid through the portal vertex. The packaging triggers a dramatic reconfiguration of the capsid shell. The protein is Major capsid protein of Pseudomonas phage KPP10 (Bacteriophage KPP10).